The following is a 426-amino-acid chain: Mothers against decapentaplegic homolog 7 (426 aa).

A disordered region spans residues 13 to 55 (LWRSRAPGGEDEEEGAGGGGGGGELRGEGATDSRAHGAGGGGP). Residues 37 to 47 (LRGEGATDSRA) show a composition bias toward basic and acidic residues. An N6-acetyllysine; alternate mark is found at lysine 64 and lysine 70. Residues lysine 64 and lysine 70 each participate in a glycyl lysine isopeptide (Lys-Gly) (interchain with G-Cter in ubiquitin); alternate cross-link. The 144-residue stretch at 64 to 207 (KAVRGAKGHH…LSRLCELESP (144 aa)) folds into the MH1 domain. The Zn(2+) site is built by cysteine 125, cysteine 180, cysteine 192, and histidine 197. Residues 208-211 (PPPY) carry the PY-motif motif. The segment at 208–217 (PPPYSRYPMD) is important for interaction with SMURF2. Residue serine 249 is modified to Phosphoserine. Residues 261–426 (WCVVAYWEEK…CWLEVIFNSR (166 aa)) form the MH2 domain.

This sequence belongs to the dwarfin/SMAD family. Interacts with WWP1. Interacts with COPS5. Interacts with NEDD4L. Interacts with STAMBP. Interacts with RNF111, AXIN1 and AXIN2. Interacts with PPP1R15A. Interacts (via MH2 domain) with EP300. Interacts with ACVR1B, SMURF1, SMURF2 and TGFBR1; SMAD7 recruits SMURF1 and SMURF2 to the TGF-beta receptor and regulates its degradation. Interacts with PDPK1 (via PH domain). Interacts with TSC22D1/TSC-22; the interaction requires TGF-beta and the interaction is inhibited by TGFBR1. Phosphorylation on Ser-249 does not affect its stability, nuclear localization or inhibitory function in TGFB signaling; however it affects its ability to regulate transcription. Phosphorylated by PDPK1. Post-translationally, ubiquitinated by WWP1. Polyubiquitinated by RNF111, which is enhanced by AXIN1 and promotes proteasomal degradation. In response to TGF-beta, ubiquitinated by SMURF1; which promotes its degradation. In terms of processing, acetylation prevents ubiquitination and degradation mediated by SMURF1. As to expression, ubiquitous with higher expression in the lung and vascular endothelium.

The protein resides in the nucleus. Its subcellular location is the cytoplasm. Its function is as follows. Antagonist of signaling by TGF-beta (transforming growth factor) type 1 receptor superfamily members; has been shown to inhibit TGF-beta (Transforming growth factor) and activin signaling by associating with their receptors thus preventing SMAD2 access. Functions as an adapter to recruit SMURF2 to the TGF-beta receptor complex. Also acts by recruiting the PPP1R15A-PP1 complex to TGFBR1, which promotes its dephosphorylation. Positively regulates PDPK1 kinase activity by stimulating its dissociation from the 14-3-3 protein YWHAQ which acts as a negative regulator. In Homo sapiens (Human), this protein is Mothers against decapentaplegic homolog 7 (SMAD7).